The chain runs to 136 residues: Peptide methionine sulfoxide reductase MsrB (136 aa).

The MsrB domain maps to 13–135 (ENDWRSKLTP…NSASLDFKDK (123 aa)). 4 residues coordinate Zn(2+): Cys52, Cys55, Cys101, and Cys104. Cys124 (nucleophile) is an active-site residue.

This sequence belongs to the MsrB Met sulfoxide reductase family. The cofactor is Zn(2+).

The enzyme catalyses L-methionyl-[protein] + [thioredoxin]-disulfide + H2O = L-methionyl-(R)-S-oxide-[protein] + [thioredoxin]-dithiol. This is Peptide methionine sulfoxide reductase MsrB from Synechococcus sp. (strain RCC307).